A 550-amino-acid polypeptide reads, in one-letter code: MKLLQRGVALALLTTFTLASETALAYEQDKTYKITVLHTNDHHGHFWRNEYGEYGLAAQKTLVDGIRKEVAAEGGSVLLLSGGDINTGVPESDLQDAEPDFRGMNLVGYDAMAIGNHEFDNPLTVLRQQEKWAKFPLLSANIYQKSTGERLFKPWALFKRQDLKIAVIGLTTDDTAKIGNPEYFTDIEFRKPADEAKLVIQELQQTEKPDIIIAATHMGHYDNGEHGSNAPGDVEMARALPAGSLAMIVGGHSQDPVCMAAENKKQVDYVPGTPCKPDQQNGIWIVQAHEWGKYVGRADFEFRNGEMKMVNYQLIPVNLKKKVTWEDGKSERVLYTPEIAENQQMISLLSPFQNKGKAQLEVKIGETNGRLEGDRDKVRFVQTNMGRLILAAQMDRTGADFAVMSGGGIRDSIEAGDISYKNVLKVQPFGNVVVYADMTGKEVIDYLTAVAQMKPDSGAYPQFANVSFVAKDGKLNDLKIKGEPVDPAKTYRMATLNFNATGGDGYPRLDNKPGYVNTGFIDAEVLKAYIQKSSPLDVSVYEPKGEVSWQ.

The first 25 residues, 1–25 (MKLLQRGVALALLTTFTLASETALA), serve as a signal peptide directing secretion. Zn(2+)-binding residues include aspartate 41, histidine 43, aspartate 84, asparagine 116, histidine 217, histidine 252, and glutamine 254. A disulfide bridge links cysteine 258 with cysteine 275. Residues 375 to 379 (RDKVR) and 498 to 504 (FNATGGD) each bind substrate.

Belongs to the 5'-nucleotidase family. Monomer. It depends on Zn(2+) as a cofactor.

Its subcellular location is the periplasm. It catalyses the reaction UDP-sugar + H2O = UMP + alpha-D-aldose 1-phosphate.. The enzyme catalyses a ribonucleoside 5'-phosphate + H2O = a ribonucleoside + phosphate. The activity of this protein is inhibited by an intracellular protein inhibitor. Functionally, degradation of external UDP-glucose to uridine monophosphate and glucose-1-phosphate, which can then be used by the cell. This is Protein UshA (ushA) from Escherichia coli (strain K12).